We begin with the raw amino-acid sequence, 489 residues long: Inositol-pentakisphosphate 2-kinase (489 aa).

The short motif at 136-140 is the EXKPK motif element; it reads EIKPK.

Belongs to the IPK1 type 2 family.

It localises to the cytoplasm. It is found in the nucleus. The enzyme catalyses 1D-myo-inositol 1,3,4,5,6-pentakisphosphate + ATP = 1D-myo-inositol hexakisphosphate + ADP + H(+). Its function is as follows. Phosphorylates Ins(1,3,4,5,6)P5 at position 2 to form Ins(1,2,3,4,5,6)P6 (InsP6 or phytate). InsP6 is involved in many processes such as mRNA export, non-homologous end-joining, endocytosis, ion channel regulation. It also protects cells from TNF-alpha-induced apoptosis. The polypeptide is Inositol-pentakisphosphate 2-kinase (Ippk) (Rattus norvegicus (Rat)).